Here is a 344-residue protein sequence, read N- to C-terminus: Protein pelota homolog (344 aa).

It belongs to the eukaryotic release factor 1 family. Pelota subfamily. Monomer. It depends on a divalent metal cation as a cofactor.

The protein resides in the cytoplasm. In terms of biological role, may function in recognizing stalled ribosomes, interact with stem-loop structures in stalled mRNA molecules, and effect endonucleolytic cleavage of the mRNA. May play a role in the release non-functional ribosomes and degradation of damaged mRNAs. Has endoribonuclease activity. This is Protein pelota homolog from Saccharolobus islandicus (strain Y.N.15.51 / Yellowstone #2) (Sulfolobus islandicus).